The following is a 505-amino-acid chain: Deoxyguanosinetriphosphate triphosphohydrolase (505 aa).

The 208-residue stretch at 66 to 273 (RLTHSLEVQQ…MEAADDISYC (208 aa)) folds into the HD domain.

The protein belongs to the dGTPase family. Type 1 subfamily. In terms of assembly, homotetramer. It depends on Mg(2+) as a cofactor.

It catalyses the reaction dGTP + H2O = 2'-deoxyguanosine + triphosphate + H(+). In terms of biological role, dGTPase preferentially hydrolyzes dGTP over the other canonical NTPs. In Escherichia fergusonii (strain ATCC 35469 / DSM 13698 / CCUG 18766 / IAM 14443 / JCM 21226 / LMG 7866 / NBRC 102419 / NCTC 12128 / CDC 0568-73), this protein is Deoxyguanosinetriphosphate triphosphohydrolase.